Reading from the N-terminus, the 354-residue chain is Selenide, water dikinase (354 aa).

The active site involves C23. Residues K26 and 54 to 56 contribute to the ATP site; that span reads TSD. A Mg(2+)-binding site is contributed by D57. ATP-binding positions include D74, D97, and 145–147; that span reads GHS. Residue D97 coordinates Mg(2+). D233 provides a ligand contact to Mg(2+).

This sequence belongs to the selenophosphate synthase 1 family. Class I subfamily. Homodimer. Mg(2+) is required as a cofactor.

It carries out the reaction hydrogenselenide + ATP + H2O = selenophosphate + AMP + phosphate + 2 H(+). Its function is as follows. Synthesizes selenophosphate from selenide and ATP. In Burkholderia cenocepacia (strain ATCC BAA-245 / DSM 16553 / LMG 16656 / NCTC 13227 / J2315 / CF5610) (Burkholderia cepacia (strain J2315)), this protein is Selenide, water dikinase.